The following is a 366-amino-acid chain: MKKVKLSLIANERSRKTSFIKRKDGIFKKLHELSTLCGVQACALIYSPFIPVPESWPSREGAKKVASRFLEMPPTARTKKMMDQETYLMERITKAKEQLKNLAAENRELQVRRFMFDCVEGKMSQYHYDAKDLQDLQSCINLYLDQLNGRIESIKENGESLLSSVSPFPTRIGVDEIGDESFSDSPIHATTGVVDTLNATNPHVLTGDMTPFLDADATAVTASSRFFDHIPYENMNMSQNLHEPFQHLVPTNVCDFFQNQNMNQVQYQAPNNLFNQIQREFYNINLNLNLNLNSNQYLNQQQSFMNPMVEQHMNHVGGRESIPFVDGNCYNYHQLPSNQLPAVDHASTSYMPSTTGVYDPYINNNL.

The 59-residue stretch at 1–59 (MKKVKLSLIANERSRKTSFIKRKDGIFKKLHELSTLCGVQACALIYSPFIPVPESWPSR) folds into the MADS-box domain. Residues 86 to 115 (TYLMERITKAKEQLKNLAAENRELQVRRFM) are a coiled coil.

Interacts with AGL62.

Its subcellular location is the nucleus. Probable transcription factor. This chain is Agamous-like MADS-box protein AGL36 (AGL36), found in Arabidopsis thaliana (Mouse-ear cress).